The sequence spans 650 residues: Threonine--tRNA ligase (650 aa).

Positions D3 to T65 constitute a TGS domain. A catalytic region spans residues D248–P548. C349, H400, and H525 together coordinate Zn(2+).

The protein belongs to the class-II aminoacyl-tRNA synthetase family. Homodimer. The cofactor is Zn(2+).

The protein localises to the cytoplasm. It catalyses the reaction tRNA(Thr) + L-threonine + ATP = L-threonyl-tRNA(Thr) + AMP + diphosphate + H(+). In terms of biological role, catalyzes the attachment of threonine to tRNA(Thr) in a two-step reaction: L-threonine is first activated by ATP to form Thr-AMP and then transferred to the acceptor end of tRNA(Thr). Also edits incorrectly charged L-seryl-tRNA(Thr). This Anaeromyxobacter dehalogenans (strain 2CP-C) protein is Threonine--tRNA ligase.